Consider the following 178-residue polypeptide: MDMTPASADGLIVLGKITSVHGVRGEVKVYSFTDPIDNLLDYRFWTLRRGDERRQIELVRGRPQGRLLVARLKGIEDRDGARALADFEVCVPIAQLPRLDEGEFYWHQLEGLRVVDREGRLFGKVDHLLETGANDVLVVRPCTGSLDDRERLLPYTDQCVLRVDLAAGEIRVDWDADF.

In terms of domain architecture, PRC barrel spans 100 to 178; it reads DEGEFYWHQL…EIRVDWDADF (79 aa).

This sequence belongs to the RimM family. Binds ribosomal protein uS19.

The protein resides in the cytoplasm. Its function is as follows. An accessory protein needed during the final step in the assembly of 30S ribosomal subunit, possibly for assembly of the head region. Essential for efficient processing of 16S rRNA. May be needed both before and after RbfA during the maturation of 16S rRNA. It has affinity for free ribosomal 30S subunits but not for 70S ribosomes. This Azotobacter vinelandii (strain DJ / ATCC BAA-1303) protein is Ribosome maturation factor RimM.